Reading from the N-terminus, the 776-residue chain is Isoamylase (776 aa).

The signal sequence occupies residues 1–26 (MKCPKILAALLGCAVLAGVPAMPAHA). Ca(2+) contacts are provided by D154, E255, T256, N258, and D285. D401 serves as the catalytic Nucleophile. C410 and C422 are disulfide-bonded. Residue E461 is the Proton donor of the active site. Intrachain disulfides connect C546/C616 and C738/C766.

It belongs to the glycosyl hydrolase 13 family. Monomer. Requires Ca(2+) as cofactor.

It catalyses the reaction Hydrolysis of (1-&gt;6)-alpha-D-glucosidic branch linkages in glycogen, amylopectin and their beta-limit dextrins.. The sequence is that of Isoamylase (iam) from Pseudomonas sp. (strain SMP1).